Consider the following 251-residue polypeptide: UPF0309 protein SAV_3856 (251 aa).

Residues 36–220 (IADTVADGGR…AGTLADRGIE (185 aa)) enclose the SIS domain.

It belongs to the UPF0309 family.

The polypeptide is UPF0309 protein SAV_3856 (Streptomyces avermitilis (strain ATCC 31267 / DSM 46492 / JCM 5070 / NBRC 14893 / NCIMB 12804 / NRRL 8165 / MA-4680)).